The chain runs to 534 residues: Serine/threonine-protein kinase 35 (534 aa).

Positions 32–176 are disordered; the sequence is VESHGSLGAQ…AAAARAMDPV (145 aa). Composition is skewed to low complexity over residues 39-65 and 166-176; these read GAQA…TSRA and PAAAARAMDPV. One can recognise a Protein kinase domain in the interval 202–530; that stretch reads YSLLAEIGRG…FELETRMDQV (329 aa). ATP is bound by residues 208–216 and Lys-231; that span reads IGRGSYGVV. Residue Asp-360 is the Proton acceptor of the active site.

The protein belongs to the protein kinase superfamily. Ser/Thr protein kinase family. In terms of assembly, interacts with PDLIM1/CLP-36. Post-translationally, autophosphorylated. In terms of tissue distribution, expressed in testis.

It is found in the nucleus. It localises to the nucleolus. The protein localises to the cytoplasm. The catalysed reaction is L-seryl-[protein] + ATP = O-phospho-L-seryl-[protein] + ADP + H(+). It catalyses the reaction L-threonyl-[protein] + ATP = O-phospho-L-threonyl-[protein] + ADP + H(+). The chain is Serine/threonine-protein kinase 35 (STK35) from Homo sapiens (Human).